The sequence spans 337 residues: Mortality factor related protein 1 (337 aa).

The 49-residue stretch at 7-55 (FEVGENVACIYKGKPYDAKITDIKTNSDGKELYCVHFKGWNNRYDEKIP) folds into the Tudor-knot domain. Residues 75–113 (HNAELPTTALKPKKKSLAAEAPRDDRDDTPGTSKGKKAK) are disordered. Positions 122-327 (TADDMKVELP…ASNDYYRRSL (206 aa)) constitute an MRG domain.

As to quaternary structure, component of the SIN3S complex, which contains at least sin-3, hda-1, athp-1 and mrg-1. Interacts with cfp-1, a component of the SET2 complex. Interacts with rfp-1. Expressed in oocytes (at protein level). Expressed mainly in germ cells, but also at lower levels in several somatic cell types, including intestinal cells.

It localises to the nucleus. The protein localises to the chromosome. Protein involved in the remodeling of chromatin thereby regulating various processes including transcription, chromosome synapsis and genome integrity. Mainly binds genomic loci carrying trimethylated histone H3 'Lys-36' (H3K36me3) or 'Lys-4' (H3K4me3), and acetylated histone H3 'Lys-9' (H3K9ac), 'Lys-27' (H3K27ac). During meiosis, required for the presynaptic pairing of homologous chromosomal regions outside of the pairing center and for the progression of chromosome synapsis. Essential maternal factor required in postembryonic germline development and in maintaining germ cell identity. Plays an important role in maintaining genomic integrity in primordial germ cells (PGCs) during meiosis by regulating DNA double-strand break (DSB) repair and synapsis. Also, required for chromatin-based transcriptional silencing in PGCs and for silencing of X-linked genes in the maternal germ line. By retaining histone acetyltransferase, cbp-1, in euchromatin, promotes the anchoring of heterochromatin at the inner nuclear membrane in intestinal and hypodermal cells. The polypeptide is Mortality factor related protein 1 (Caenorhabditis elegans).